The following is a 331-amino-acid chain: Geranylgeranyl transferase type-2 subunit beta (331 aa).

At Gly2 the chain carries N-acetylglycine. Thr3 carries the post-translational modification Phosphothreonine. PFTB repeat units lie at residues 20–61 (LEKH…DLMG), 68–109 (REEI…TLYD), 116–157 (INKV…ALLG), 164–205 (VEKA…AITS), 212–253 (SDLL…KIIG), and 260–302 (REKL…SLLG). 190–192 (HAG) provides a ligand contact to geranylgeranyl diphosphate. Residues Asp238 and Cys240 each contribute to the Zn(2+) site. 241–244 (YSWW) contributes to the geranylgeranyl diphosphate binding site. His290 is a Zn(2+) binding site.

The protein belongs to the protein prenyltransferase subunit beta family. In terms of assembly, heterotrimer composed of RABGGTA, RABGGTB and CHM; within this trimer, RABGGTA and RABGGTB form the catalytic component B, while CHM (component A) mediates peptide substrate binding. The Rab GGTase dimer (RGGT) interacts with CHM (component A) prior to Rab protein binding; the association is stabilized by geranylgeranyl pyrophosphate (GGpp). The CHM:RGGT:Rab complex is destabilized by GGpp. Interaction of RABGGTB with prenylated PTP4A2 precludes its association with RABGGTA and inhibits enzyme activity. Interacts with CHODL. Interacts with non-phosphorylated form of RAB8A; phosphorylation of RAB8A at 'Thr-72' disrupts this interaction. Requires Zn(2+) as cofactor.

It catalyses the reaction geranylgeranyl diphosphate + L-cysteinyl-[protein] = S-geranylgeranyl-L-cysteinyl-[protein] + diphosphate. With respect to regulation, the enzymatic reaction requires the aid of a Rab escort protein (also called component A). Its function is as follows. Catalyzes the transfer of a geranylgeranyl moiety from geranylgeranyl diphosphate to both cysteines of Rab proteins with the C-terminal sequence -XXCC, -XCXC and -CCXX, such as RAB1A, RAB3A, RAB5A and RAB7A. The polypeptide is Geranylgeranyl transferase type-2 subunit beta (RABGGTB) (Bos taurus (Bovine)).